The chain runs to 302 residues: Sulfate adenylyltransferase subunit 2 (302 aa).

Belongs to the PAPS reductase family. CysD subfamily. As to quaternary structure, heterodimer composed of CysD, the smaller subunit, and CysN.

It carries out the reaction sulfate + ATP + H(+) = adenosine 5'-phosphosulfate + diphosphate. The protein operates within sulfur metabolism; hydrogen sulfide biosynthesis; sulfite from sulfate: step 1/3. Functionally, with CysN forms the ATP sulfurylase (ATPS) that catalyzes the adenylation of sulfate producing adenosine 5'-phosphosulfate (APS) and diphosphate, the first enzymatic step in sulfur assimilation pathway. APS synthesis involves the formation of a high-energy phosphoric-sulfuric acid anhydride bond driven by GTP hydrolysis by CysN coupled to ATP hydrolysis by CysD. This is Sulfate adenylyltransferase subunit 2 from Shewanella halifaxensis (strain HAW-EB4).